We begin with the raw amino-acid sequence, 686 residues long: DNA ligase (686 aa).

NAD(+)-binding positions include 31-35 (DSEYD), 80-81 (SL), and Glu109. Residue Lys111 is the N6-AMP-lysine intermediate of the active site. Positions 132, 166, 280, and 304 each coordinate NAD(+). 4 residues coordinate Zn(2+): Cys430, Cys433, Cys448, and Cys453. One can recognise a BRCT domain in the interval 611–686 (NVEGILSGKT…IWSEQDLLDL (76 aa)).

Belongs to the NAD-dependent DNA ligase family. LigA subfamily. Requires Mg(2+) as cofactor. Mn(2+) is required as a cofactor.

The catalysed reaction is NAD(+) + (deoxyribonucleotide)n-3'-hydroxyl + 5'-phospho-(deoxyribonucleotide)m = (deoxyribonucleotide)n+m + AMP + beta-nicotinamide D-nucleotide.. Functionally, DNA ligase that catalyzes the formation of phosphodiester linkages between 5'-phosphoryl and 3'-hydroxyl groups in double-stranded DNA using NAD as a coenzyme and as the energy source for the reaction. It is essential for DNA replication and repair of damaged DNA. In Lactococcus lactis subsp. cremoris (strain SK11), this protein is DNA ligase.